A 1243-amino-acid chain; its full sequence is MGDMTNSDFYSKNQRNESSHGGEFGCTMEELRSLMELRGTEAVVKIKETYGDTEAICRRLKTSPVEGLPGTAPDLEKRKQIFGQNFIPPKKPKTFLQLVWEALQDVTLIILEIAAIISLGLSFYHPPGEGNEGCATAQGGAEDEGEAEAGWIEGAAILLSVICVVLVTAFNDWSKEKQFRGLQSRIEQEQKFTVVRAGQVVQIPVAEIVVGDIAQVKYGDLLPADGLFIQGNDLKIDESSLTGESDQVRKSVDKDPMLLSGTHVMEGSGRMLVTAVGVNSQTGIIFTLLGAGGEEEEKKDKKGVKKGDGLQLPAADGAAASNAADSANASLVNGKMQDGNVDASQSKAKQQDGAAAMEMQPLKSAEGGDADDRKKASMHKKEKSVLQGKLTKLAVQIGKAGLVMSAITVIILVLYFTVDTFVVNKKPWLPECTPVYVQYFVKFFIIGVTVLVVAVPEGLPLAVTISLAYSVKKMMKDNNLVRHLDACETMGNATAICSDKTGTLTTNRMTVVQAYVGDVHYKEIPDPSSINTKTMELLINAIAINSAYTTKILPPEKEGALPRQVGNKTECGLLGFVLDLKQDYEPVRSQMPEEKLYKVYTFNSVRKSMSTVIKLPDESFRMYSKGASEIVLKKCCKILNGAGEPRVFRPRDRDEMVKKVIEPMACDGLRTICVAYRDFPSSPEPDWDNENDILNELTCICVVGIEDPVRPEVPEAIRKCQRAGITVRMVTGDNINTARAIAIKCGIIHPGEDFLCLEGKEFNRRIRNEKGEIEQERIDKIWPKLRVLARSSPTDKHTLVKGIIDSTHTEQRQVVAVTGDGTNDGPALKKADVGFAMGIAGTDVAKEASDIILTDDNFSSIVKAVMWGRNVYDSISKFLQFQLTVNVVAVIVAFTGACITQDSPLKAVQMLWVNLIMDTFASLALATEPPTETLLLRKPYGRNKPLISRTMMKNILGHAVYQLALIFTLLFVGEKMFQIDSGRNAPLHSPPSEHYTIIFNTFVMMQLFNEINARKIHGERNVFDGIFRNPIFCTIVLGTFAIQIVIVQFGGKPFSCSPLQLDQWMWCIFIGLGELVWGQVIATIPTSRLKFLKEAGRLTQKEEIPEEELNEDVEEIDHAERELRRGQILWFRGLNRIQTQIRVVKAFRSSLYEGLEKPESRTSIHNFMAHPEFRIEDSQPHIPLIDDTDLEEDAALKQNSSPPSSLNKNNSAIDSGINLTTDTSKSATSSSPGSPIHSLETSL.

The segment covering 1-13 has biased composition (polar residues); it reads MGDMTNSDFYSKN. A disordered region spans residues 1-24; the sequence is MGDMTNSDFYSKNQRNESSHGGEF. Over 1–94 the chain is Cytoplasmic; that stretch reads MGDMTNSDFY…NFIPPKKPKT (94 aa). Serine 18 is modified (phosphoserine). Residues 95–115 form a helical membrane-spanning segment; that stretch reads FLQLVWEALQDVTLIILEIAA. Residues 116–152 are Extracellular-facing; that stretch reads IISLGLSFYHPPGEGNEGCATAQGGAEDEGEAEAGWI. Residues 153 to 173 traverse the membrane as a helical segment; sequence EGAAILLSVICVVLVTAFNDW. Topologically, residues 174–390 are cytoplasmic; the sequence is SKEKQFRGLQ…KEKSVLQGKL (217 aa). Positions 334-381 are disordered; it reads GKMQDGNVDASQSKAKQQDGAAAMEMQPLKSAEGGDADDRKKASMHKK. The helical transmembrane segment at 391-410 threads the bilayer; that stretch reads TKLAVQIGKAGLVMSAITVI. The Extracellular portion of the chain corresponds to 411 to 443; the sequence is ILVLYFTVDTFVVNKKPWLPECTPVYVQYFVKF. Residues 444–461 form a helical membrane-spanning segment; that stretch reads FIIGVTVLVVAVPEGLPL. Topologically, residues 462 to 875 are cytoplasmic; the sequence is AVTISLAYSV…MWGRNVYDSI (414 aa). The active-site 4-aspartylphosphate intermediate is aspartate 499. Residues aspartate 820 and aspartate 824 each coordinate Mg(2+). The helical transmembrane segment at 876 to 895 threads the bilayer; sequence SKFLQFQLTVNVVAVIVAFT. At 896 to 905 the chain is on the extracellular side; sequence GACITQDSPL. The helical transmembrane segment at 906-926 threads the bilayer; sequence KAVQMLWVNLIMDTFASLALA. The Cytoplasmic segment spans residues 927-946; it reads TEPPTETLLLRKPYGRNKPL. Residues 947–969 form a helical membrane-spanning segment; sequence ISRTMMKNILGHAVYQLALIFTL. The Extracellular portion of the chain corresponds to 970–987; the sequence is LFVGEKMFQIDSGRNAPL. A helical membrane pass occupies residues 988 to 1009; that stretch reads HSPPSEHYTIIFNTFVMMQLFN. The Cytoplasmic segment spans residues 1010–1028; that stretch reads EINARKIHGERNVFDGIFR. A helical membrane pass occupies residues 1029–1050; the sequence is NPIFCTIVLGTFAIQIVIVQFG. Residues 1051 to 1060 are Extracellular-facing; sequence GKPFSCSPLQ. The chain crosses the membrane as a helical span at residues 1061 to 1082; it reads LDQWMWCIFIGLGELVWGQVIA. Residues 1083-1243 are Cytoplasmic-facing; it reads TIPTSRLKFL…SPIHSLETSL (161 aa). Phosphoserine is present on residues glutamate 1120, arginine 1132, and leucine 1134. The tract at residues 1123-1140 is calmodulin-binding subdomain A; it reads LRRGQILWFRGLNRIQTQ. Threonine 1139 carries the phosphothreonine; by PKC modification. Positions 1141–1150 are calmodulin-binding subdomain B; that stretch reads IRVVKAFRSS. A phosphoserine mark is found at alanine 1146, leucine 1151, serine 1163, histidine 1165, aspartate 1177, and serine 1178. Threonine 1188 is subject to Phosphothreonine. A disordered region spans residues 1194-1243; that stretch reads AALKQNSSPPSSLNKNNSAIDSGINLTTDTSKSATSSSPGSPIHSLETSL. Low complexity-rich tracts occupy residues 1196 to 1211 and 1220 to 1234; these read LKQN…KNNS and TTDT…SPGS. A Phosphoserine; by PKA modification is found at serine 1201. The residue at position 1211 (serine 1211) is a Phosphoserine.

It belongs to the cation transport ATPase (P-type) (TC 3.A.3) family. Type IIB subfamily. Interacts with PDZD11. Mainly expressed in brain cortex. Found in low levels in skeletal muscle, heart muscle, stomach, liver, kidney and lung. Isoforms containing segment B are found in brain cortex and at low levels in other tissues. Isoforms containing segments X and W are found at low levels in all tissues. Isoforms containing segment A and segment Z are found at low levels in skeletal muscle and heart muscle.

It is found in the cell membrane. The protein resides in the synapse. Its subcellular location is the apical cell membrane. It localises to the basolateral cell membrane. It carries out the reaction Ca(2+)(in) + ATP + H2O = Ca(2+)(out) + ADP + phosphate + H(+). Its activity is regulated as follows. Up-regulated by calmodulin which increases the affinity of the pump for Ca(2+) ions. ATP-driven Ca(2+) ion pump involved in the maintenance of basal intracellular Ca(2+) levels in specialized cells of cerebellar circuit and vestibular and cochlear systems. Uses ATP as an energy source to transport cytosolic Ca(2+) ions across the plasma membrane to the extracellular compartment. Has fast activation and Ca(2+) clearance rate suited to control fast neuronal Ca(2+) dynamics. At parallel fiber to Purkinje neuron synapse, mediates presynaptic Ca(2+) efflux in response to climbing fiber-induced Ca(2+) rise. Provides for fast return of Ca(2+) concentrations back to their resting levels, ultimately contributing to long-term depression induction and motor learning. Plays an essential role in hearing and balance. In cochlear hair cells, shuttles Ca(2+) ions from stereocilia to the endolymph and dissipates Ca(2+) transients generated by the opening of the mechanoelectrical transduction channels. Regulates Ca(2+) levels in the vestibular system, where it contributes to the formation of otoconia. In non-excitable cells, regulates Ca(2+) signaling through spatial control of Ca(2+) ions extrusion and dissipation of Ca(2+) transients generated by store-operated channels. In lactating mammary gland, allows for the high content of Ca(2+) ions in the milk. The sequence is that of Plasma membrane calcium-transporting ATPase 2 from Homo sapiens (Human).